The chain runs to 383 residues: uncharacterized protein (383 aa).

The helical transmembrane segment at 6 to 26 (LFLFSCLYFIGGNLKALVLGI) threads the bilayer. Positions 131 to 303 (YKKLKNLGFN…LAMVLLNNKY (173 aa)) constitute an ATP-grasp domain.

The protein localises to the membrane. This is an uncharacterized protein from Methanocaldococcus jannaschii (strain ATCC 43067 / DSM 2661 / JAL-1 / JCM 10045 / NBRC 100440) (Methanococcus jannaschii).